Here is a 556-residue protein sequence, read N- to C-terminus: MPKFDVSKSDLERLIGRSFSIEEWEDLVLYAKCELDDVWEENGKVYFKLDSKDTNRPDLWSAEGVARQIKWALGIEKGLPKYEVKKSNVTVYVDEKLKDIRPYGVYAIVEGLRLDEDSLSQMIQLQEKIALTFGRRRREVAIGIFDFDKIKPPIYYKAAEKTEKFAPLGYKEEMTLEEILEKHEKGREYGHLIKDKQFYPLLIDSEGNVLSMPPIINSEFTGRVTTDTKNVFIDVTGWKLEKVMLALNVMVTALAERGGKIRSVRVVYKDFEIETPDLTPKEFEVELDYIRKLSGLELNDGEIKELLEKMMYEVEISRGRAKLKYPAFRDDIMHARDILEDVLIAYGYNNIEPEEPKLAVQGRGDPFKDFEDAIRDLMVGFGLQEVMTFNLTNKEVQFKKMNIPEEEIVEIANPISQRWSALRKWILPSLMEFLSNNTHEEYPQRIFEVGLATLIDESRETKTVSEPKLAVALAGTGYTFTNAKEILDALMRHLGFEYEIEEVEHGSFIPGRAGKIIVNGRDIGIIGEVHPQVLENWNIEVPVVAFEIFLRPLYRH.

A B5 domain is found at 278-353; that stretch reads LTPKEFEVEL…IAYGYNNIEP (76 aa). Mg(2+) is bound by residues D331, D337, E340, and D341.

It belongs to the phenylalanyl-tRNA synthetase beta subunit family. Type 2 subfamily. As to quaternary structure, tetramer of two alpha and two beta subunits. Mg(2+) serves as cofactor.

It localises to the cytoplasm. It carries out the reaction tRNA(Phe) + L-phenylalanine + ATP = L-phenylalanyl-tRNA(Phe) + AMP + diphosphate + H(+). The polypeptide is Phenylalanine--tRNA ligase beta subunit (Pyrococcus horikoshii (strain ATCC 700860 / DSM 12428 / JCM 9974 / NBRC 100139 / OT-3)).